A 1032-amino-acid chain; its full sequence is Toll-like receptor 9 (1032 aa).

The first 25 residues, 1-25 (MGPCRGALHPLSLLVQAAALALALA), serve as a signal peptide directing secretion. Over 26–815 (QGTLPAFLPC…QDLRLCLDEA (790 aa)) the chain is Extracellular. The cysteines at positions 35 and 45 are disulfide-linked. 47 to 51 (WLFLK) contributes to the DNA binding site. LRR repeat units follow at residues 62 to 85 (RGNVTSLSLYSNRIHHLHDYDFVH), 87 to 110 (VHLRRLNLKWNCPPASLSPMHFPC), 122 to 147 (VPTLEDLNLSYNSITTVPALPSSLVS), 150 to 166 (LSRTNILVLDPATLAGL), 167 to 190 (YALRFLFLDGNCYYKNPCQQALQV), 198 to 221 (LGNLTHLSLKYNNLTVVPRGLPPS), 223 to 242 (EYLLLSYNHIITLAPEDLAN), 243 to 268 (LTALRVLDVGGNCRRCDHARNPCREC), 283 to 306 (LSHLEGLVLRDSSLYSLDPRWFHG), 308 to 332 (GNLMVLDLSENFLYDCITKTKAFYG), 333 to 356 (LARLRRLNLSFNYHKKVSFAHLHL), 363 to 386 (LLSLQELDIHGIFFRSLSKTTLQS), 390 to 413 (LPMLQRLHLQLNFISQAQLSIFGA), 415 to 440 (PGLRYVDLSDNRISGAAEPAAATGEV), 472 to 496 (CRTLNFTLDLSRNNLVTVQPEMFVR), 498 to 521 (ARLQCLGLSHNSISQAVNGSQFVP), 522 to 545 (LSNLRVLDLSHNKLDLYHGRSFTE), 547 to 574 (PRLEALDLSYNSQPFSMRGVGHNLSFVA), 576 to 600 (LPALRYLSLAHNGIHSRVSQQLRSA), 602 to 624 (LRALDFSGNTLSQMWAEGDLYLR), 629 to 652 (LRSLVQLDLSQNRLHTLLPRNLDN), 654 to 677 (PKSLRLLRLRDNYLAFFNWSSLAL), 678 to 701 (LPKLEALDLAGNQLKALSNGSLPN), 703 to 725 (TQLQRLDLSGNSIGFVVPSFFAL), 726 to 749 (AVRLRELNLSANALKTVEPSWFGS), and 751 to 774 (AGALKVLDVTANPLHCACGATFVD). N64 carries N-linked (GlcNAc...) asparagine glycosylation. DNA-binding positions include 72–77 (SNRIHH) and 95–109 (KWNCPPASLSPMHFP). The cysteines at positions 98 and 110 are disulfide-linked. An N-linked (GlcNAc...) asparagine glycan is attached at N129. DNA contacts are provided by residues Y132, R152, and 179–181 (YYK). An intrachain disulfide couples C178 to C184. N200 carries an N-linked (GlcNAc...) asparagine glycan. Y208 serves as a coordination point for DNA. 2 N-linked (GlcNAc...) asparagine glycosylation sites follow: N210 and N242. 2 disulfide bridges follow: C255–C268 and C258–C265. C258 is lipidated: S-palmitoyl cysteine. Residue R262 coordinates DNA. C265 carries the S-palmitoyl cysteine lipid modification. The N-linked (GlcNAc...) asparagine glycan is linked to N340. A disulfide bridge links C472 with C502. Residues N476 and N515 are each glycosylated (N-linked (GlcNAc...) asparagine). The N-linked (GlcNAc...) asparagine glycan is linked to N569. N671, N696, and N701 each carry an N-linked (GlcNAc...) asparagine glycan. N733 is a glycosylation site (N-linked (GlcNAc...) asparagine). Cystine bridges form between C766/C792 and C768/C811. The helical transmembrane segment at 816–836 (LSWVCFSLSLLAVALSLAVPM) threads the bilayer. Residues 837–1032 (LHQLCGWDLW…QNFCRGPTTA (196 aa)) lie on the Cytoplasmic side of the membrane. Residues 868-1013 (LAYDAFVVFD…SFWAQLGTAL (146 aa)) enclose the TIR domain.

The protein belongs to the Toll-like receptor family. In terms of assembly, monomer and homodimer. Exists as a monomer in the absence of unmethylated cytidine-phosphate-guanosine (CpG) ligand. Proteolytic processing of an insertion loop (Z-loop) is required for homodimerization upon binding to the unmethylated CpG ligand leading to its activation. Interacts with MYD88 via their respective TIR domains. Interacts with BTK. Interacts (via transmembrane domain) with UNC93B1. Interacts with CD300LH; the interaction may promote full activation of TLR9-triggered innate responses. Interacts with CNPY3 and HSP90B1; this interaction is required for proper folding in the endoplasmic reticulum. Interacts with SMPDL3B. Interacts with CD82; this interaction is essential for TLR9-dependent myddosome formation in response to CpG stimulation. Post-translationally, activated by proteolytic cleavage of the flexible loop between repeats LRR14 and LRR15 within the ectodomain. Cleavage requires UNC93B1. Proteolytically processed by first removing the majority of the ectodomain by either asparagine endopeptidase (AEP) or a cathepsin followed by a trimming event that is solely cathepsin mediated and required for optimal receptor signaling. In terms of processing, palmitoylated by ZDHHC3 in the Golgi regulates TLR9 trafficking from the Golgi to endosomes. Depalmitoylation by PPT1 controls the release of TLR9 from UNC93B1 in endosomes.

The protein localises to the endoplasmic reticulum membrane. Its subcellular location is the endosome. It localises to the lysosome. It is found in the cytoplasmic vesicle. The protein resides in the phagosome. Key component of innate and adaptive immunity. TLRs (Toll-like receptors) control host immune response against pathogens through recognition of molecular patterns specific to microorganisms. TLR9 is a nucleotide-sensing TLR which is activated by unmethylated cytidine-phosphate-guanosine (CpG) dinucleotides. Acts via MYD88 and TRAF6, leading to NF-kappa-B activation, cytokine secretion and the inflammatory response. Upon CpG stimulation, induces B-cell proliferation, activation, survival and antibody production. The protein is Toll-like receptor 9 (TLR9) of Canis lupus familiaris (Dog).